A 471-amino-acid polypeptide reads, in one-letter code: COP9 signalosome complex subunit 1 (471 aa).

The region spanning 249 to 411 (CFLLASFDHC…KILYARDVDQ (163 aa)) is the PCI domain. Positions 445–471 (HVKSPPREGSQGELTPANSQSRMSTNM) are disordered. Serine 448 and serine 454 each carry phosphoserine. A compositionally biased stretch (polar residues) spans 456 to 471 (GELTPANSQSRMSTNM). A Phosphothreonine modification is found at threonine 459. Residue serine 463 is modified to Phosphoserine.

This sequence belongs to the CSN1 family. As to quaternary structure, component of the CSN complex, composed of COPS1/GPS1, COPS2, COPS3, COPS4, COPS5, COPS6, COPS7 (COPS7A or COPS7B), COPS8 and COPS9. In the complex, it probably interacts directly with COPS2, COPS3, COPS4 and COPS5. Interacts directly with inositol kinase ITPK1. Interacts with CAPN8. Interacts with USP48. Interacts with ASB4; this interaction negatively regulates GPS1. As to expression, expressed in the base region of the oxyntic and pyloric mucosae.

The protein localises to the cytoplasm. It localises to the nucleus. In terms of biological role, essential component of the COP9 signalosome complex (CSN), a complex involved in various cellular and developmental processes. The CSN complex is an essential regulator of the ubiquitin (Ubl) conjugation pathway by mediating the deneddylation of the cullin subunits of SCF-type E3 ligase complexes, leading to decrease the Ubl ligase activity of SCF-type complexes such as SCF, CSA or DDB2. The complex is also involved in phosphorylation of p53/TP53, c-jun/JUN, IkappaBalpha/NFKBIA, ITPK1 and IRF8/ICSBP, possibly via its association with CK2 and PKD kinases. CSN-dependent phosphorylation of TP53 and JUN promotes and protects degradation by the Ubl system, respectively. Suppresses G-protein- and mitogen-activated protein kinase-mediated signal transduction. The sequence is that of COP9 signalosome complex subunit 1 (Gps1) from Mus musculus (Mouse).